Here is a 58-residue protein sequence, read N- to C-terminus: uncharacterized protein (58 aa).

4Fe-4S ferredoxin-type domains follow at residues 2–27 and 28–57; these read GIKI…IKTY and GVAI…VDTS. Positions 9, 12, 15, 19, 37, 40, 43, and 47 each coordinate [4Fe-4S] cluster.

[4Fe-4S] cluster serves as cofactor.

Ferredoxins are iron-sulfur proteins that transfer electrons probably in the CO-dehydrogenase complex. This is an uncharacterized protein from Methanocaldococcus jannaschii (strain ATCC 43067 / DSM 2661 / JAL-1 / JCM 10045 / NBRC 100440) (Methanococcus jannaschii).